We begin with the raw amino-acid sequence, 63 residues long: Large ribosomal subunit protein bL28 (63 aa).

Belongs to the bacterial ribosomal protein bL28 family.

The protein is Large ribosomal subunit protein bL28 of Desulfosudis oleivorans (strain DSM 6200 / JCM 39069 / Hxd3) (Desulfococcus oleovorans).